The chain runs to 289 residues: Agroclavine dehydrogenase (289 aa).

Belongs to the fgaFS/easG family. Monomer.

The enzyme catalyses agroclavine + NADP(+) = didehydroagroclavine + NADPH + H(+). The protein operates within alkaloid biosynthesis; ergot alkaloid biosynthesis. Its function is as follows. Agroclavine dehydrogenase; part of the gene cluster that mediates the biosynthesis of fungal ergot alkaloid ergovaline, the predominant ergopeptine product in E.festucae var. lolii. DmaW catalyzes the first step of ergot alkaloid biosynthesis by condensing dimethylallyl diphosphate (DMAP) and tryptophan to form 4-dimethylallyl-L-tryptophan. The second step is catalyzed by the methyltransferase easF that methylates 4-dimethylallyl-L-tryptophan in the presence of S-adenosyl-L-methionine, resulting in the formation of 4-dimethylallyl-L-abrine. The catalase easC and the FAD-dependent oxidoreductase easE then transform 4-dimethylallyl-L-abrine to chanoclavine-I which is further oxidized by easD in the presence of NAD(+), resulting in the formation of chanoclavine-I aldehyde. Agroclavine dehydrogenase easG then mediates the conversion of chanoclavine-I aldehyde to agroclavine via a non-enzymatic adduct reaction: the substrate is an iminium intermediate that is formed spontaneously from chanoclavine-I aldehyde in the presence of glutathione. Further conversion of agroclavine to paspalic acid is a two-step process involving oxidation of agroclavine to elymoclavine and of elymoclavine to paspalic acid, the second step being performed by the elymoclavine oxidase cloA. However, cloA does not encode a functional enzyme indicating that C.fusiformis terminates its ergot alkaloid pathway at elymoclavine. The protein is Agroclavine dehydrogenase of Claviceps fusiformis (Ergot fungus).